The primary structure comprises 507 residues: Cytochrome P450 3A28 (507 aa).

Position 442 (Cys-442) interacts with heme.

The protein belongs to the cytochrome P450 family. It depends on heme as a cofactor.

It is found in the endoplasmic reticulum membrane. It localises to the microsome membrane. It carries out the reaction an organic molecule + reduced [NADPH--hemoprotein reductase] + O2 = an alcohol + oxidized [NADPH--hemoprotein reductase] + H2O + H(+). In terms of biological role, cytochromes P450 are a group of heme-thiolate monooxygenases. In liver microsomes, this enzyme is involved in an NADPH-dependent electron transport pathway. It oxidizes a variety of structurally unrelated compounds, including steroids, fatty acids, and xenobiotics. This is Cytochrome P450 3A28 (CYP3A28) from Bos taurus (Bovine).